We begin with the raw amino-acid sequence, 805 residues long: Phenylalanine--tRNA ligase beta subunit (805 aa).

The tRNA-binding domain maps to 39-154; sequence SEGLKKVVVG…DDATPGDPVF (116 aa). The B5 domain occupies 410–485; sequence VQPTTVTIDL…RLYGYDNLPA (76 aa). 4 residues coordinate Mg(2+): Asp463, Asp469, Glu472, and Glu473. Residues 712–805 enclose the FDX-ACB domain; that stretch reads SKFPSITRDV…LTDELGAEIR (94 aa).

The protein belongs to the phenylalanyl-tRNA synthetase beta subunit family. Type 1 subfamily. In terms of assembly, tetramer of two alpha and two beta subunits. Requires Mg(2+) as cofactor.

The protein resides in the cytoplasm. It carries out the reaction tRNA(Phe) + L-phenylalanine + ATP = L-phenylalanyl-tRNA(Phe) + AMP + diphosphate + H(+). In Lactiplantibacillus plantarum (strain ATCC BAA-793 / NCIMB 8826 / WCFS1) (Lactobacillus plantarum), this protein is Phenylalanine--tRNA ligase beta subunit.